Consider the following 112-residue polypeptide: Nucleoid-associated protein CA_C0126 (112 aa).

Residues 93-102 (EEETSGEMKK) show a composition bias toward basic and acidic residues. The tract at residues 93-112 (EEETSGEMKKLTGGLNIPGL) is disordered.

This sequence belongs to the YbaB/EbfC family. As to quaternary structure, homodimer.

The protein localises to the cytoplasm. Its subcellular location is the nucleoid. Its function is as follows. Binds to DNA and alters its conformation. May be involved in regulation of gene expression, nucleoid organization and DNA protection. This Clostridium acetobutylicum (strain ATCC 824 / DSM 792 / JCM 1419 / IAM 19013 / LMG 5710 / NBRC 13948 / NRRL B-527 / VKM B-1787 / 2291 / W) protein is Nucleoid-associated protein CA_C0126.